Reading from the N-terminus, the 446-residue chain is Tubulin beta-5 chain (446 aa).

The MREI motif signature appears at 1-4 (MREI). The GTP site is built by glutamine 11, glutamate 69, serine 138, glycine 142, threonine 143, glycine 144, asparagine 204, and asparagine 226. A Mg(2+)-binding site is contributed by glutamate 69. The residue at position 438 (glutamate 438) is a 5-glutamyl polyglutamate.

This sequence belongs to the tubulin family. As to quaternary structure, dimer of alpha and beta chains. A typical microtubule is a hollow water-filled tube with an outer diameter of 25 nm and an inner diameter of 15 nM. Alpha-beta heterodimers associate head-to-tail to form protofilaments running lengthwise along the microtubule wall with the beta-tubulin subunit facing the microtubule plus end conferring a structural polarity. Microtubules usually have 13 protofilaments but different protofilament numbers can be found in some organisms and specialized cells. The cofactor is Mg(2+). Some glutamate residues at the C-terminus are polyglycylated, resulting in polyglycine chains on the gamma-carboxyl group. Glycylation is mainly limited to tubulin incorporated into axonemes (cilia and flagella) whereas glutamylation is prevalent in neuronal cells, centrioles, axonemes, and the mitotic spindle. Both modifications can coexist on the same protein on adjacent residues, and lowering polyglycylation levels increases polyglutamylation, and reciprocally. The precise function of polyglycylation is still unclear. Post-translationally, some glutamate residues at the C-terminus are polyglutamylated, resulting in polyglutamate chains on the gamma-carboxyl group. Polyglutamylation plays a key role in microtubule severing by spastin (SPAST). SPAST preferentially recognizes and acts on microtubules decorated with short polyglutamate tails: severing activity by SPAST increases as the number of glutamates per tubulin rises from one to eight, but decreases beyond this glutamylation threshold.

It localises to the cytoplasm. The protein resides in the cytoskeleton. Functionally, tubulin is the major constituent of microtubules, a cylinder consisting of laterally associated linear protofilaments composed of alpha- and beta-tubulin heterodimers. Microtubules grow by the addition of GTP-tubulin dimers to the microtubule end, where a stabilizing cap forms. Below the cap, tubulin dimers are in GDP-bound state, owing to GTPase activity of alpha-tubulin. The protein is Tubulin beta-5 chain of Gallus gallus (Chicken).